The chain runs to 543 residues: Chaperonin GroEL 2 (543 aa).

ATP-binding positions include 29–32 (TLGP), 86–90 (DGTTT), glycine 413, 479–481 (NAA), and aspartate 495.

Belongs to the chaperonin (HSP60) family. As to quaternary structure, forms a cylinder of 14 subunits composed of two heptameric rings stacked back-to-back. Interacts with the co-chaperonin GroES.

The protein resides in the cytoplasm. It carries out the reaction ATP + H2O + a folded polypeptide = ADP + phosphate + an unfolded polypeptide.. Its function is as follows. Together with its co-chaperonin GroES, plays an essential role in assisting protein folding. The GroEL-GroES system forms a nano-cage that allows encapsulation of the non-native substrate proteins and provides a physical environment optimized to promote and accelerate protein folding. The chain is Chaperonin GroEL 2 from Synechococcus sp. (strain CC9311).